Here is a 51-residue protein sequence, read N- to C-terminus: Large ribosomal subunit protein eL39 (51 aa).

The protein belongs to the eukaryotic ribosomal protein eL39 family.

This is Large ribosomal subunit protein eL39 (RpL39) from Drosophila melanogaster (Fruit fly).